The chain runs to 2344 residues: MAAMSRLTGMTTAILPEKKPLNFFLDLRDKTPPCCIRATGKLAWPVFLGQYGKEGPLETCNKCGKWLNGFGCFGLEDLGDVCLCSIAQQKHKFGPVCLCNRAYIHDCGRWRRRSRFLKHYKALNKVIPCAYQFDESFSTPVFEGEVDDLFVELGAPTSMGFMDKKLLKKGKKLMDKFVDVDEPCLTSRDASLLDSIASDNTIRAKWEEEYGVEMVQAARDRKDFMKNLRLALDNRPANPVTWYTKLGNITEKGKQWAKKVVYGACKVTDPLKTLASILLVGLHNVIAVDTTVMLSTFKPVNLLAILMDWTNDLTGFVTTLVRLLELYGVVQATVNLIVEGVKSFWDKVVCATDRCFDLLKRLFDTFEDSVPTGPTAGCLIFMAFVFSTVVGYLPNNSVITTFMKGAGKLTTFAGVIGAIRTLWITINQHMVAKDLTSIQQKVMTVVKMANEAATLDQLEIVSCLCSDLENTLTNRCTLPSYNQHLGILNASQKVISDLHTMVLGKINMTKQRPQPVAVIFKGAPGIGKTYLVHRIARDLGCQHPSTINFGLDHFDSYTGEEVAIADEFNTCGDGESWVELFIQMVNTNPCPLNCDKAENKNKVFNSKYLLCTTNSNMILNATHPRAGAFYRRVMIVEARNKAVESWQATRHGSKPGRSCYSKDMSHLTFQVYPHNMPAPGFVFVGDKLVKSQVAPREYKYSELLDLIKSEHPDVASFEGANRFNFVYPDAQYDQALLMWKQYFVMYGCVARLAKNFVDDIPYNQVHISRASDPKIEGCVEYQCKFQHLWRMVPQFVLGCVNMTNQLGTPLTQQQLDRVTNGVEGVTVTTVNNILPFHSQTTLINPSFIKLIWAVRKHLKGLSGVTKVAQFIWRVMTNPVDAYGSLVRTLTGAATFSDDPVSTTIICSNCTIQIHSCGGLLVRYSRDPVPVASDNVDRGDQGVDVFTDPNLISGFSWRQIAHLFVEVISRLCANHLVNLATMAALGAVATKAFQGVKGKTKRGRGARVNLGNDEYDEWQAARREFVNAHDMTAEEYLAMKNKAAMGSDDQDSVMFRSWWTRRQLRPDEDQVTIVGRGGVRNEVIRTRVRQTPKGPKTLDDGGFYDNDYEGLPGFMRHNGSGWMIHIGNGLYISNTHTARSSCSEVVTCSPTTDLCLVKGEAIRSVAQIAEGTPVCDWKKSPISTYGIKKTLSDSTKIDVLAYDGCTQTTHGDCGLPLYDSSGKIVAIHTGKLLGFSKMCTLIDLTITKGVYETSNFFCGEPIDYRGITAHRLVGAEPRPPVSGTRYAKVPGVPEEYKTGYRPANLGRSDPDSDKSLMNIAVKNLQVYQQEPKLDKVDEFIERAAADVLGYLRFLTKGERQVNLNFKAAFNTLDLSTSCGPFVPGKKIDHVKDGVMDQVLAKHLYKCWSVANSGKALHHIYACGLKDELRPLDKVKEGKKRLLWGCDVGVAVCAAAVFHNICYKLKMVARFGPIAVGVDMTSRDVDVIINNLTSKASDFLCLDYSKWDSTMSPCVVRLAIDILADCCEQTELTKSVVLTLKSHPMTILDAMIVQTKRGLPSGMPFTSVINSICHWLLWSAAVYKSCAEIGLHCSNLYEDAPFYTYGDDGVYAMTPMMVSLLPAIIENLRDYGLLPTAADKTEFIDVCPLNKISFLKRTFELTDIGWISKLDKSSILRQLEWSKTTSRHMMIEETYDLAKEERGVQLEELQVAAAAHGQEFFNFVRKELERQQAYTQFSVYSYDAARKILADRKRVVSVVPDDEFVNVMEGKARTAPQGEAAGTATTASVPGTTTDGMDPGVVATTSVVTAENSSASIATAGIGGPPQQVDQQETWRTNFYYNDVFTWSVADAPGSILYTVQHSPQNNPFTAVLSQMYAGWAGGMQFRFIVAGSGVFGGRLVAAVIPPGIEIGPGLEVRQFPHVVIDARSLEPVTITMPDLRPNMYHPTGDPGLVPTLVLSVYNNLINPFGGSTSAIQVTVETRPSEDFEFVMIRAPSSKTVDSISPAGLLTTPVLTGVGNDNRWNGQIVGLQPVPGGFSTCNRHWNLNGSTYGWSSPRFADIDHRRGSASYPGNNATNVLQFWYANAGSAIDNPISQVAPDGFPDMSFVPFNGPGIPAAGWVGFGAIWNSNSGAPNVTTVQAYELGFATGAPGNLQPTTNTSGSQTVAKSIYAVVTGTAQNPAGLFVMASGVISTPSANAITYTPQPDRIVTTPGTPAAAPVGKNTPIMFASVVRRTGDVNATAGSANGTQYGRGSQPLPVTIGLSLNNYSSALMPGQFFVWQLTFASGFMEIGLSVDGYFYAGTGASTTLIDLIELIDVRPVGPRPSKSTLVFNLGGTANGFSYV.

An SF3 helicase domain is found at 492–653 (QKVISDLHTM…ESWQATRHGS (162 aa)). 522–529 (GAPGIGKT) provides a ligand contact to ATP. An O-(5'-phospho-RNA)-tyrosine modification is found at tyrosine 1014. At tyrosine 1014 the chain carries O-UMP-tyrosine; transient. The Peptidase C24 domain maps to 1109 to 1244 (GLPGFMRHNG…SKMCTLIDLT (136 aa)). Active-site for 3CLpro activity residues include histidine 1135, aspartate 1152, and cysteine 1212. In terms of domain architecture, RdRp catalytic spans 1495-1619 (SDFLCLDYSK…AMTPMMVSLL (125 aa)). Residues cysteine 1584 and cysteine 1591 are joined by a disulfide bond. Residues 1771–1796 (RTAPQGEAAGTATTASVPGTTTDGMD) are disordered. Residues 1778–1794 (AAGTATTASVPGTTTDG) show a composition bias toward low complexity.

In terms of assembly, homodimer. Homomultimer. Interacts with host type II histo-blood group structures antigens at the surface of target cells. The cofactor is Mn(2+). Specific enzymatic cleavages by its own cysteine protease yield mature proteins. The protease cleaves itself from the nascent polyprotein autocatalytically. Precursor p41 can be cleaved by viral 3CLpro into protein p19 and VPg, or cleaved by host protease into protein p23/2 and protein p18. In terms of processing, VPg is uridylylated by the polymerase and is covalently attached to the 5'-end of the polyadenylated genomic and subgenomic RNAs. This uridylylated form acts as a nucleotide-peptide primer for the polymerase.

The protein localises to the host cytoplasm. It is found in the host endoplasmic reticulum. It localises to the virion. It carries out the reaction a ribonucleoside 5'-triphosphate + H2O = a ribonucleoside 5'-diphosphate + phosphate + H(+). The enzyme catalyses Endopeptidase with a preference for cleavage when the P1 position is occupied by Glu-|-Xaa and the P1' position is occupied by Gly-|-Yaa.. The catalysed reaction is RNA(n) + a ribonucleoside 5'-triphosphate = RNA(n+1) + diphosphate. In terms of biological role, together with NTPase and NS4, initiates the formation of the replication complex. Induces the proliferation of the host smooth ER membranes forming long tubular structures. These remodeled membranes probably form the viral factories that contain the replication complex. Displays NTPase activity, but no helicase activity. Induces the formation of convoluted membranes derived from the host ER. These remodeled membranes probably form the viral factories that contain the replication complex. Together with NS2 and NS4, initiates the formation of the replication complex. Its function is as follows. Probable key protein responsible for the formation of membrane alterations by the virus. Induces the formation of convoluted membranes derived from the host ER. These remodeled membranes probably form the viral factories that contain the replication complex. Together with NS2 and NTPase, initiates the formation of the replication complex. Functionally, viral genome-linked protein is covalently linked to the 5'-end of the positive-strand, negative-strand genomic RNAs and subgenomic RNA. Acts as a genome-linked replication primer. May recruit ribosome to viral RNA thereby promoting viral proteins translation. Interacts with host translation initiation complex to allow the translation of viral proteins. In terms of biological role, processes the polyprotein. 3CLpro-RdRp is first released by autocleavage, then all other proteins are cleaved. May cleave polyadenylate-binding protein thereby inhibiting cellular translation. Replicates genomic and antigenomic RNA by recognizing replications specific signals. Also transcribes a subgenomic mRNA by initiating RNA synthesis internally on antigenomic RNA. This sgRNA codes for structural proteins. Catalyzes the covalent attachment VPg with viral RNAs. Its function is as follows. Capsid protein VP60 self assembles to form an icosahedral capsid with a T=3 symmetry, about 35 nm in diameter, and consisting of 180 capsid proteins. A smaller form of capsid with a diameter of 23 nm might be capsid proteins assembled as icosahedron with T=1 symmetry. The capsid encapsulate VP2 proteins and genomic or subgenomic RNA. Attaches virion to target cells by binding histo-blood group antigens, inducing endocytosis of the viral particle. Acidification of the endosome induces conformational change of capsid protein thereby injecting virus genomic RNA into host cytoplasm. This Rabbit hemorrhagic disease virus (strain SD) (Ra/LV/RHDV/SD/1989/FR) protein is Genome polyprotein.